A 252-amino-acid polypeptide reads, in one-letter code: Mitochondrial peculiar membrane protein 1 (252 aa).

Positions 230-252 (TTTTSKGSSPQVKHKVVSVDEDN) are disordered.

Its subcellular location is the mitochondrion membrane. The polypeptide is Mitochondrial peculiar membrane protein 1 (MPM1) (Saccharomyces cerevisiae (strain ATCC 204508 / S288c) (Baker's yeast)).